The chain runs to 67 residues: Large ribosomal subunit protein uL29 (67 aa).

Belongs to the universal ribosomal protein uL29 family.

The polypeptide is Large ribosomal subunit protein uL29 (Magnetococcus marinus (strain ATCC BAA-1437 / JCM 17883 / MC-1)).